Here is a 751-residue protein sequence, read N- to C-terminus: Ecdysteroid-phosphate phosphatase (751 aa).

In terms of domain architecture, UBA spans 16–60; that stretch reads CISKQHLTPLQTLLQMGFPRHRAEKALASTGNRGVQIASDWLLAH. The SH3 domain maps to 271-336; sequence ATKQVQKVVY…PVNYTERTAE (66 aa). 2 disordered regions span residues 367–394 and 458–484; these read GRSI…FEES and EPPA…PGSL. A compositionally biased stretch (basic and acidic residues) spans 466–479; sequence RPDDTLSVHSDHSL. Positions 490-751 are phosphatase-like; sequence KNRKIYIMRH…RFEWNALSAT (262 aa). Arginine 498 is a catalytic residue. The active-site Tele-phosphohistidine intermediate is histidine 499. Histidine 681 is a catalytic residue.

It localises to the cytoplasm. Its subcellular location is the cytosol. The protein resides in the nucleus. The enzyme catalyses ecdysone 22-phosphate + H2O = ecdysone + phosphate. It catalyses the reaction 20-hydroxyecdysone 22-phosphate + H2O = 20-hydroxyecdysone + phosphate. The catalysed reaction is 2-deoxyecdysone 22-phosphate + H2O = 2-deoxyecdysone + phosphate. In terms of biological role, steroid phosphatase that dephosphorylates ecdysteroids such as ecdysone 22-phosphate (E22P), 3-epi-ecdysone 22-phosphate (E22P) and 3-epi-ecdysone 2-phosphate (E2P). Likely catalyzes the conversion of inactive phosphorylated ecdysteroids into their active forms. Shows high activity towards ecdysone 22-phosphate (E22P), but is also significantly active against 3-epi-ecdysone 22-phosphate (E22P) and 3-epi-ecdysone 2-phosphate (E2P). Also displays acid phosphatase activity towards 4-nitrophenyl phosphate (pNNP) in vitro. Has no activity towards 3-epi-ecdysone 3-phosphate (E3P). This is Ecdysteroid-phosphate phosphatase from Drosophila melanogaster (Fruit fly).